Here is a 452-residue protein sequence, read N- to C-terminus: MLSFLQKLGKSFMLPIAVLPAVGIILALGREDVFNIPFVYQAGTAVFDHLPLIFAIGIAIGISKDSNGAAGLSGAISYLMLDAATKTIDKTNNMAVFGGIIAGLIAGYTYNRFKDTKLPEYLGFFSGRRLVPILTAIITIILAGIFGVVWPPIQSCINSFGEWMLGLGGIGAGIFGLFNRLLIPLGLHHVLNNIFWFQFGEYNGVTGDLARFFAKDPTAGTYMTGFFPIMMFGLPAACLAMVVTAKPSKRKATAGMMIGFALTAFITGITEPIEFAFMFLSPLLYAVHAVLTGLSLFIVNWLGIRSGFSFSAGAIDYVLSYGIAEKPLLLLLVGICYAAVYFIVFYVLIKALNLKTPGREDDDVDEVLDENTVQDVNENIMLKGLGGKENLQTIDHCATRLRLTVKDTALVDEALLKKAGAKGVVKSGGQSVQVIIGPNVEFAAEELRAAVK.

Residues 1–361 (MLSFLQKLGK…LNLKTPGRED (361 aa)) enclose the PTS EIIC type-1 domain. 9 helical membrane passes run 8–28 (LGKS…ILAL), 42–62 (AGTA…AIGI), 91–111 (TNNM…YTYN), 130–150 (LVPI…GVVW), 163–183 (WMLG…RLLI), 223–243 (MTGF…AMVV), 257–277 (MIGF…EFAF), 279–299 (FLSP…LFIV), and 329–349 (LLLL…YVLI). In terms of domain architecture, PTS EIIB type-1 spans 375 to 452 (DVNENIMLKG…AAEELRAAVK (78 aa)). The active-site Phosphocysteine intermediate; for EIIB activity is cysteine 397.

As to quaternary structure, interacts with FloT.

The protein localises to the cell membrane. It localises to the membrane raft. It carries out the reaction N(pros)-phospho-L-histidyl-[protein] + N-acetyl-D-glucosamine(out) = N-acetyl-D-glucosamine 6-phosphate(in) + L-histidyl-[protein]. The phosphoenolpyruvate-dependent sugar phosphotransferase system (sugar PTS), a major carbohydrate active -transport system, catalyzes the phosphorylation of incoming sugar substrates concomitantly with their translocation across the cell membrane. This system is involved in N-acetylglucosamine transport. This chain is PTS system N-acetylglucosamine-specific EIICB component (nagP), found in Bacillus subtilis (strain 168).